Reading from the N-terminus, the 132-residue chain is D-ribose pyranase (132 aa).

H20 acts as the Proton donor in catalysis. Residues D28, H99, and 121 to 123 (YSN) each bind substrate.

The protein belongs to the RbsD / FucU family. RbsD subfamily. Homodecamer.

The protein localises to the cytoplasm. The enzyme catalyses beta-D-ribopyranose = beta-D-ribofuranose. It participates in carbohydrate metabolism; D-ribose degradation; D-ribose 5-phosphate from beta-D-ribopyranose: step 1/2. Its function is as follows. Catalyzes the interconversion of beta-pyran and beta-furan forms of D-ribose. This is D-ribose pyranase from Lactococcus lactis subsp. cremoris (strain MG1363).